The primary structure comprises 127 residues: Ribosome-binding factor A (127 aa).

It belongs to the RbfA family. In terms of assembly, monomer. Binds 30S ribosomal subunits, but not 50S ribosomal subunits or 70S ribosomes.

It localises to the cytoplasm. Functionally, one of several proteins that assist in the late maturation steps of the functional core of the 30S ribosomal subunit. Associates with free 30S ribosomal subunits (but not with 30S subunits that are part of 70S ribosomes or polysomes). Required for efficient processing of 16S rRNA. May interact with the 5'-terminal helix region of 16S rRNA. In Actinobacillus pleuropneumoniae serotype 7 (strain AP76), this protein is Ribosome-binding factor A.